A 478-amino-acid polypeptide reads, in one-letter code: Noelin-2 (478 aa).

The first 16 residues, 1–16, serve as a signal peptide directing secretion; the sequence is MSVPLLKIGAVLSTMA. N-linked (GlcNAc...) asparagine glycosylation is found at Asn-33, Asn-98, Asn-179, Asn-299, Asn-334, Asn-423, and Asn-465. Coiled coils occupy residues 86 to 109 and 160 to 218; these read SRELRQLMEKVQNVSQSMEVLELR and LEQY…QKLG. In terms of domain architecture, Olfactomedin-like spans 218–470; it reads GCGKLTGVSN…QVLYNVTLFH (253 aa). Residues Cys-219 and Cys-401 are joined by a disulfide bond.

In terms of assembly, peripherally associated with AMPAR complex. AMPAR complex consists of an inner core made of 4 pore-forming GluA/GRIA proteins (GRIA1, GRIA2, GRIA3 and GRIA4) and 4 major auxiliary subunits arranged in a twofold symmetry. One of the two pairs of distinct binding sites is occupied either by CNIH2, CNIH3 or CACNG2, CACNG3. The other harbors CACNG2, CACNG3, CACNG4, CACNG8 or GSG1L. This inner core of AMPAR complex is complemented by outer core constituents binding directly to the GluA/GRIA proteins at sites distinct from the interaction sites of the inner core constituents. Outer core constituents include at least PRRT1, PRRT2, CKAMP44/SHISA9, FRRS1L and NRN1. The proteins of the inner and outer core serve as a platform for other, more peripherally associated AMPAR constituents, including OLFM2. Alone or in combination, these auxiliary subunits control the gating and pharmacology of the AMPAR complex and profoundly impact their biogenesis and protein processing. Interacts with GRIA2. Interacts with OLFM1 and OLFM3. Interacts with SRF; the interaction promotes dissociation of SRF from the transcriptional repressor HEY2. Interacts with RUNX2. As to expression, expressed in the brain (at protein level). Expressed in carotid arteries and the aorta, mainly in aortic SMCs.

The protein localises to the secreted. It is found in the synapse. Its subcellular location is the membrane. The protein resides in the nucleus. It localises to the cytoplasm. In terms of biological role, involved in transforming growth factor beta (TGF-beta)-induced smooth muscle differentiation. TGF-beta induces expression and nuclear translocation of OLFM2 where it binds to SRF, causing its dissociation from the transcriptional repressor HEY2/HERP1 and facilitating binding of SRF to target genes. Plays a role in AMPAR complex organization. Is a regulator of vascular smooth-muscle cell (SMC) phenotypic switching, that acts by promoting RUNX2 and inhibiting MYOCD binding to SRF. SMC phenotypic switching is the process through which vascular SMCs undergo transition between a quiescent contractile phenotype and a proliferative synthetic phenotype in response to pathological stimuli. SMC phenotypic plasticity is essential for vascular development and remodeling. The sequence is that of Noelin-2 (Olfm2) from Rattus norvegicus (Rat).